The sequence spans 213 residues: Orotate phosphoribosyltransferase (213 aa).

A 5-phospho-alpha-D-ribose 1-diphosphate-binding site is contributed by K26. Position 34–35 (34–35 (FF)) interacts with orotate. 5-phospho-alpha-D-ribose 1-diphosphate is bound by residues 72–73 (YK), R99, K100, K103, H105, and 124–132 (DDVITAGTA). Residues T128 and R156 each contribute to the orotate site.

The protein belongs to the purine/pyrimidine phosphoribosyltransferase family. PyrE subfamily. In terms of assembly, homodimer. The cofactor is Mg(2+).

It carries out the reaction orotidine 5'-phosphate + diphosphate = orotate + 5-phospho-alpha-D-ribose 1-diphosphate. The protein operates within pyrimidine metabolism; UMP biosynthesis via de novo pathway; UMP from orotate: step 1/2. Its function is as follows. Catalyzes the transfer of a ribosyl phosphate group from 5-phosphoribose 1-diphosphate to orotate, leading to the formation of orotidine monophosphate (OMP). In Actinobacillus pleuropneumoniae serotype 5b (strain L20), this protein is Orotate phosphoribosyltransferase.